The following is a 349-amino-acid chain: D-alanine--D-alanine ligase (349 aa).

Residues 132–335 form the ATP-grasp domain; it reads KHVFEAVGVP…YSDLIEKLVD (204 aa). 162–217 is an ATP binding site; it reads VEKLEFPVFVKPANMGSSVGISKVDDLADLQPALSEAYKYDNRVVIEQGVDAREIE. Residues aspartate 289, glutamate 302, and asparagine 304 each coordinate Mg(2+).

The protein belongs to the D-alanine--D-alanine ligase family. Mg(2+) is required as a cofactor. Mn(2+) serves as cofactor.

Its subcellular location is the cytoplasm. It carries out the reaction 2 D-alanine + ATP = D-alanyl-D-alanine + ADP + phosphate + H(+). It functions in the pathway cell wall biogenesis; peptidoglycan biosynthesis. Functionally, cell wall formation. The protein is D-alanine--D-alanine ligase of Lactococcus lactis subsp. lactis (strain IL1403) (Streptococcus lactis).